Reading from the N-terminus, the 253-residue chain is MSTPFYVSPQQAMADRAEYARKGIARGRSLVVLQFADGIVFVGENPSRALHKFSEIYDRIGFAAAGKYNEYENLRIGGVRYADLRGYTYDRDDVTARGLANVYAQTLGTIFSSAAEKPYEVELVVAEVGETPEGDQIYRLPHDGSIVDEHGSVAVGGNAEQISTYLDQRHQDGMTLAEALKLAVQSLSRDTNGSEREIPAERLEVAVLDRTRPQQRKFKRIVGRELSRLLEAAGASTAGEAGSAEDEGSDDEK.

Residues 232-242 are compositionally biased toward low complexity; the sequence is AAGASTAGEAG. The segment at 232–253 is disordered; it reads AAGASTAGEAGSAEDEGSDDEK. Positions 243-253 are enriched in acidic residues; that stretch reads SAEDEGSDDEK.

It belongs to the peptidase T1A family. In terms of assembly, the 20S proteasome core is composed of 14 alpha and 14 beta subunits that assemble into four stacked heptameric rings, resulting in a barrel-shaped structure. The two inner rings, each composed of seven catalytic beta subunits, are sandwiched by two outer rings, each composed of seven alpha subunits. The catalytic chamber with the active sites is on the inside of the barrel. Has a gated structure, the ends of the cylinder being occluded by the N-termini of the alpha-subunits. Is capped by the proteasome-associated ATPase, ARC.

The protein resides in the cytoplasm. Its pathway is protein degradation; proteasomal Pup-dependent pathway. Its activity is regulated as follows. The formation of the proteasomal ATPase ARC-20S proteasome complex, likely via the docking of the C-termini of ARC into the intersubunit pockets in the alpha-rings, may trigger opening of the gate for substrate entry. Interconversion between the open-gate and close-gate conformations leads to a dynamic regulation of the 20S proteasome proteolysis activity. Component of the proteasome core, a large protease complex with broad specificity involved in protein degradation. The chain is Proteasome subunit alpha from Streptomyces avermitilis (strain ATCC 31267 / DSM 46492 / JCM 5070 / NBRC 14893 / NCIMB 12804 / NRRL 8165 / MA-4680).